A 689-amino-acid polypeptide reads, in one-letter code: Glycine--tRNA ligase beta subunit (689 aa).

Belongs to the class-II aminoacyl-tRNA synthetase family. As to quaternary structure, tetramer of two alpha and two beta subunits.

Its subcellular location is the cytoplasm. The enzyme catalyses tRNA(Gly) + glycine + ATP = glycyl-tRNA(Gly) + AMP + diphosphate. This is Glycine--tRNA ligase beta subunit from Shigella flexneri serotype 5b (strain 8401).